The following is a 154-amino-acid chain: Calmodulin-like protein 4 (154 aa).

EF-hand domains follow at residues 7–42, 43–78, 80–115, and 116–151; these read EQMV…LGLE, PTDQ…KMKD, DGDE…LGEK, and MTDE…AERK. The Ca(2+) site is built by aspartate 20, asparagine 22, aspartate 24, cysteine 26, glutamate 31, aspartate 56, aspartate 58, asparagine 60, glutamate 67, aspartate 93, aspartate 95, asparagine 97, and glutamate 104. Lysine 115 carries the post-translational modification N6,N6,N6-trimethyllysine. Ca(2+) is bound by residues aspartate 129, aspartate 131, aspartate 133, glutamine 135, and glutamate 140.

This sequence belongs to the calmodulin family.

Its function is as follows. Potential calcium sensor. This chain is Calmodulin-like protein 4 (CML4), found in Oryza sativa subsp. japonica (Rice).